The sequence spans 362 residues: Peptide chain release factor 1 (362 aa).

An N5-methylglutamine modification is found at Gln237. Residues 289–308 (AAEISDTRRNLLGSGDRSDR) form a disordered region.

It belongs to the prokaryotic/mitochondrial release factor family. Methylated by PrmC. Methylation increases the termination efficiency of RF1.

The protein localises to the cytoplasm. In terms of biological role, peptide chain release factor 1 directs the termination of translation in response to the peptide chain termination codons UAG and UAA. The sequence is that of Peptide chain release factor 1 from Vibrio cholerae serotype O1 (strain ATCC 39541 / Classical Ogawa 395 / O395).